Consider the following 239-residue polypeptide: UDP-2,3-diacylglucosamine hydrolase (239 aa).

Residues aspartate 8, histidine 10, aspartate 41, asparagine 78, and histidine 113 each contribute to the Mn(2+) site. 78-79 contacts substrate; it reads NR. Substrate-binding residues include aspartate 121, serine 159, asparagine 163, lysine 166, and histidine 194. Histidine 194 and histidine 196 together coordinate Mn(2+).

The protein belongs to the LpxH family. It depends on Mn(2+) as a cofactor.

The protein localises to the cell inner membrane. The enzyme catalyses UDP-2-N,3-O-bis[(3R)-3-hydroxytetradecanoyl]-alpha-D-glucosamine + H2O = 2-N,3-O-bis[(3R)-3-hydroxytetradecanoyl]-alpha-D-glucosaminyl 1-phosphate + UMP + 2 H(+). Its pathway is glycolipid biosynthesis; lipid IV(A) biosynthesis; lipid IV(A) from (3R)-3-hydroxytetradecanoyl-[acyl-carrier-protein] and UDP-N-acetyl-alpha-D-glucosamine: step 4/6. Its function is as follows. Hydrolyzes the pyrophosphate bond of UDP-2,3-diacylglucosamine to yield 2,3-diacylglucosamine 1-phosphate (lipid X) and UMP by catalyzing the attack of water at the alpha-P atom. Involved in the biosynthesis of lipid A, a phosphorylated glycolipid that anchors the lipopolysaccharide to the outer membrane of the cell. The chain is UDP-2,3-diacylglucosamine hydrolase from Shewanella sp. (strain MR-4).